The following is a 1654-amino-acid chain: Outer membrane protein B (1654 aa).

A propeptide spanning residues 1334–1361 (GALRYLGTPETAEMAGPEAGAISAAVAA) is cleaved from the precursor. Residues 1366 to 1654 (IDNVAYGIWA…QGTLKVRVNF (289 aa)) form the Autotransporter domain.

The protein belongs to the rickettsiae OmpA/OmpB family. The N-terminus is blocked.

The protein localises to the periplasm. Its subcellular location is the secreted. It localises to the cell surface. The protein resides in the cell outer membrane. Its function is as follows. The 120 kDa surface-exposed protein is a major structural protein which may play a role as a rickettsial virulence factor and/or immunogen during infection. The 32 kDa beta peptide may serve as a membrane anchor. This Rickettsia rickettsii protein is Outer membrane protein B (ompB).